The primary structure comprises 323 residues: Acetyl-coenzyme A carboxylase carboxyl transferase subunit alpha (323 aa).

In terms of domain architecture, CoA carboxyltransferase C-terminal spans 39-293 (RLAGKSQQLT…KRSLAESLRQ (255 aa)).

It belongs to the AccA family. As to quaternary structure, acetyl-CoA carboxylase is a heterohexamer composed of biotin carboxyl carrier protein (AccB), biotin carboxylase (AccC) and two subunits each of ACCase subunit alpha (AccA) and ACCase subunit beta (AccD).

It is found in the cytoplasm. It carries out the reaction N(6)-carboxybiotinyl-L-lysyl-[protein] + acetyl-CoA = N(6)-biotinyl-L-lysyl-[protein] + malonyl-CoA. It functions in the pathway lipid metabolism; malonyl-CoA biosynthesis; malonyl-CoA from acetyl-CoA: step 1/1. Its function is as follows. Component of the acetyl coenzyme A carboxylase (ACC) complex. First, biotin carboxylase catalyzes the carboxylation of biotin on its carrier protein (BCCP) and then the CO(2) group is transferred by the carboxyltransferase to acetyl-CoA to form malonyl-CoA. In Cupriavidus metallidurans (strain ATCC 43123 / DSM 2839 / NBRC 102507 / CH34) (Ralstonia metallidurans), this protein is Acetyl-coenzyme A carboxylase carboxyl transferase subunit alpha.